We begin with the raw amino-acid sequence, 138 residues long: Small ribosomal subunit protein uS11c (138 aa).

The segment at 1–21 (MAKSIPKIGSRKTGRIGSRKH) is disordered. The segment covering 9 to 21 (GSRKTGRIGSRKH) has biased composition (basic residues).

Belongs to the universal ribosomal protein uS11 family. As to quaternary structure, part of the 30S ribosomal subunit.

The protein resides in the plastid. It is found in the chloroplast. The polypeptide is Small ribosomal subunit protein uS11c (Pisum sativum (Garden pea)).